The chain runs to 531 residues: MSQEILDQVRRRRTFAIISHPDAGKTTLTEKLLLFSGAIQSAGTVKGKKTGKFATSDWMEIEKQRGISVASSVMQFDYKDHTVNLLDTPGHQDFSEDTYRVLTAVDSALMVIDAAKGVEAQTIKLLNVCRLRDTPIVTFMNKYDREVRDSLELLDEVENILKIRCAPVTWPIGMGKNFKGVYHILNDEIYLFEAGGERLPHEFDIIKGIDNPELEQRFPLEIQQLRDEIELVQAASNEFNLDEFLAGELTPVFFGSAINNFGIQEILNSLIDWAPAPKPRDATVRMVEPDEPKFSGFIFKIQANMDPKHRDRIAFLRVCSGKFERGMKMKHLRINREIAASSVVTFMSHDRELVEEAYAGDIIGIPNHGNIQIGDSFSEGEQLAFTGIPFFAPELFRSVRIKNPLKIKQLQKGLQQLGEEGAVQVFKPMSGADLILGAVGVLQFEVVTSRLANEYGVEAVFDSASIWSARWVSCDDKKKLAEFEKANAGNLAIDAGGNLAYLAPNRVNLGLTQERWPDIVFHETREHSVKL.

Residues 10–278 enclose the tr-type G domain; it reads RRRRTFAIIS…SLIDWAPAPK (269 aa). GTP-binding positions include 19-26, 87-91, and 141-144; these read SHPDAGKT, DTPGH, and NKYD.

This sequence belongs to the TRAFAC class translation factor GTPase superfamily. Classic translation factor GTPase family. PrfC subfamily.

It localises to the cytoplasm. Its function is as follows. Increases the formation of ribosomal termination complexes and stimulates activities of RF-1 and RF-2. It binds guanine nucleotides and has strong preference for UGA stop codons. It may interact directly with the ribosome. The stimulation of RF-1 and RF-2 is significantly reduced by GTP and GDP, but not by GMP. The protein is Peptide chain release factor 3 of Neisseria meningitidis serogroup B (strain ATCC BAA-335 / MC58).